The sequence spans 121 residues: Large ribosomal subunit protein bL12 (121 aa).

Belongs to the bacterial ribosomal protein bL12 family. As to quaternary structure, homodimer. Part of the ribosomal stalk of the 50S ribosomal subunit. Forms a multimeric L10(L12)X complex, where L10 forms an elongated spine to which 2 to 4 L12 dimers bind in a sequential fashion. Binds GTP-bound translation factors.

In terms of biological role, forms part of the ribosomal stalk which helps the ribosome interact with GTP-bound translation factors. Is thus essential for accurate translation. This Mesomycoplasma hyopneumoniae (strain 232) (Mycoplasma hyopneumoniae) protein is Large ribosomal subunit protein bL12.